Here is a 123-residue protein sequence, read N- to C-terminus: uncharacterized protein (123 aa).

A run of 4 helical transmembrane segments spans residues 9-31 (LLLR…WISF), 38-56 (VLTL…VFAV), 67-91 (VIAV…AALY), and 98-114 (VSIV…IISA).

The protein to E.coli YhgE.

Its subcellular location is the cell membrane. This is an uncharacterized protein from Bacillus subtilis (strain 168).